Consider the following 273-residue polypeptide: Rhamnulose-1-phosphate aldolase (273 aa).

Residue glutamate 117 is part of the active site. Residues histidine 140, histidine 142, and histidine 211 each coordinate Zn(2+).

The protein belongs to the aldolase class II family. RhaD subfamily. It depends on Zn(2+) as a cofactor.

It is found in the cytoplasm. The catalysed reaction is L-rhamnulose 1-phosphate = (S)-lactaldehyde + dihydroxyacetone phosphate. It participates in carbohydrate degradation; L-rhamnose degradation; glycerone phosphate from L-rhamnose: step 3/3. Its function is as follows. Catalyzes the reversible cleavage of L-rhamnulose-1-phosphate to dihydroxyacetone phosphate (DHAP) and L-lactaldehyde. The protein is Rhamnulose-1-phosphate aldolase of Listeria monocytogenes serovar 1/2a (strain ATCC BAA-679 / EGD-e).